A 142-amino-acid chain; its full sequence is Large ribosomal subunit protein uL13 (142 aa).

Belongs to the universal ribosomal protein uL13 family. In terms of assembly, part of the 50S ribosomal subunit.

Its function is as follows. This protein is one of the early assembly proteins of the 50S ribosomal subunit, although it is not seen to bind rRNA by itself. It is important during the early stages of 50S assembly. The chain is Large ribosomal subunit protein uL13 from Koribacter versatilis (strain Ellin345).